A 426-amino-acid chain; its full sequence is UDP-N-acetylglucosamine 1-carboxyvinyltransferase (426 aa).

22-23 (KN) is a binding site for phosphoenolpyruvate. Arg-93 provides a ligand contact to UDP-N-acetyl-alpha-D-glucosamine. Cys-117 functions as the Proton donor in the catalytic mechanism. A 2-(S-cysteinyl)pyruvic acid O-phosphothioketal modification is found at Cys-117. UDP-N-acetyl-alpha-D-glucosamine-binding positions include 162-165 (KVSV), Asp-307, and Ile-329.

The protein belongs to the EPSP synthase family. MurA subfamily.

It localises to the cytoplasm. It catalyses the reaction phosphoenolpyruvate + UDP-N-acetyl-alpha-D-glucosamine = UDP-N-acetyl-3-O-(1-carboxyvinyl)-alpha-D-glucosamine + phosphate. Its pathway is cell wall biogenesis; peptidoglycan biosynthesis. Its function is as follows. Cell wall formation. Adds enolpyruvyl to UDP-N-acetylglucosamine. In Haemophilus ducreyi (strain 35000HP / ATCC 700724), this protein is UDP-N-acetylglucosamine 1-carboxyvinyltransferase.